A 507-amino-acid polypeptide reads, in one-letter code: ATP synthase subunit alpha, chloroplastic (507 aa).

170–177 contributes to the ATP binding site; the sequence is GDRQTGKT. Threonine 257 carries the post-translational modification Phosphothreonine.

The protein belongs to the ATPase alpha/beta chains family. As to quaternary structure, F-type ATPases have 2 components, CF(1) - the catalytic core - and CF(0) - the membrane proton channel. CF(1) has five subunits: alpha(3), beta(3), gamma(1), delta(1), epsilon(1). CF(0) has four main subunits: a, b, b' and c.

The protein resides in the plastid. Its subcellular location is the chloroplast thylakoid membrane. It catalyses the reaction ATP + H2O + 4 H(+)(in) = ADP + phosphate + 5 H(+)(out). In terms of biological role, produces ATP from ADP in the presence of a proton gradient across the membrane. The alpha chain is a regulatory subunit. This chain is ATP synthase subunit alpha, chloroplastic, found in Arabis hirsuta (Hairy rock-cress).